The sequence spans 262 residues: Putative protein-methionine-sulfoxide reductase subunit YedZ1 (262 aa).

The protein belongs to the MsrP family.

Its function is as follows. Part of the YedY1-YedZ1 system that may repair oxidized proteins containing methionine sulfoxide residues (Met-O). The sequence is that of Putative protein-methionine-sulfoxide reductase subunit YedZ1 from Azospira oryzae (strain ATCC BAA-33 / DSM 13638 / PS) (Dechlorosoma suillum).